The primary structure comprises 511 residues: Alpha-amylase 2B (511 aa).

The signal sequence occupies residues 1–15 (MKFFLLLFTIGFCWA). Gln16 carries the post-translational modification Pyrrolidone carboxylic acid. 3 disulfide bridges follow: Cys43-Cys101, Cys85-Cys130, and Cys156-Cys175. The Ca(2+) site is built by Asn115, Arg173, and Asp182. Residue Arg210 coordinates chloride. Residue Asp212 is the Nucleophile of the active site. His216 is a binding site for Ca(2+). Catalysis depends on Glu248, which acts as the Proton donor. Positions 313 and 352 each coordinate chloride. 2 disulfide bridges follow: Cys393–Cys399 and Cys465–Cys477.

The protein belongs to the glycosyl hydrolase 13 family. As to quaternary structure, monomer. Ca(2+) is required as a cofactor. Requires chloride as cofactor.

It is found in the secreted. The enzyme catalyses Endohydrolysis of (1-&gt;4)-alpha-D-glucosidic linkages in polysaccharides containing three or more (1-&gt;4)-alpha-linked D-glucose units.. This is Alpha-amylase 2B (AMY2B) from Homo sapiens (Human).